A 148-amino-acid polypeptide reads, in one-letter code: Putative transmembrane protein ORF23 (148 aa).

An N-terminal signal peptide occupies residues 1–18 (MVIILLGVSIVVPGLFLA). Residues 19-118 (TETPQTNTFE…YVGWPSGAET (100 aa)) are Extracellular-facing. A helical transmembrane segment spans residues 119 to 139 (IITNIADIIIMATAVMIIGAI). Over 140–148 (YTGYKVSIK) the chain is Cytoplasmic.

Its subcellular location is the host membrane. The chain is Putative transmembrane protein ORF23 from His1 virus (isolate Australia/Victoria) (His1V).